We begin with the raw amino-acid sequence, 2527 residues long: Leucine-rich repeat serine/threonine-protein kinase 2 (2527 aa).

Residues 1-969 (MASGSCQGCE…RSSKLQSHMR (969 aa)) form a required for RAB29-mediated activation region. Residues 319 to 348 (LTETIFLNQDLEEKNENQENDDEGEEDKLF) are a coiled coil. A phosphoserine mark is found at Ser910, Ser935, Ser955, and Ser973. LRR repeat units follow at residues 983–1004 (YITS…SQKC), 1012–1033 (HLEK…LCET), 1036–1057 (SLTH…LLKM), 1059–1080 (CIAN…DPTV), 1084–1105 (TLKQ…LTDV), 1108–1129 (KLEQ…LRLK), 1130–1150 (ELKI…NFLE), 1156–1171 (ESFS…MPFL), 1174–1196 (SMTI…LNLP), 1197–1218 (HLRS…AHWK), 1221–1245 (NLRE…YLWS), 1246–1267 (RVEK…IGCL), and 1269–1291 (NLTS…MGKL). A Phosphoserine; by autocatalysis modification is found at Ser1292. The region spanning 1328-1511 (KAVPYNRMKL…KTIINESLNF (184 aa)) is the Roc domain. Residue 1341 to 1348 (GNTGSGKT) participates in GTP binding. Residue Ser1444 is modified to Phosphoserine. The COR domain occupies 1546–1740 (PVIDRKRLLQ…RMYWRQGIYL (195 aa)). Residues 1879 to 2138 (QAPEFLLGDG…FDILNSAELV (260 aa)) form the Protein kinase domain. ATP contacts are provided by Leu1885, Asp1887, Gly1888, Gly1891, Val1893, Ala1904, Lys1906, Met1947, Glu1948, Ala1950, Ser1954, and Arg1957. The active-site Proton acceptor is the Asp1994. Residues His1998, Leu2001, Ala2016, and Asp2017 each contribute to the ATP site. 2098–2121 (EYGCAPWPMVEKLIKQCLKENPQE) lines the GTP pocket. WD repeat units lie at residues 2139–2183 (CLTR…SFLD), 2188–2228 (GYTS…LVIN), 2233–2276 (KKRH…AIFE), 2281–2327 (KLKG…FSFS), 2333–2377 (QKLI…EVWD), 2402–2438 (KESK…LLLD), and 2443–2497 (RLIR…TVWD). Residue 2295 to 2298 (NVST) coordinates GTP.

Belongs to the protein kinase superfamily. TKL Ser/Thr protein kinase family. In terms of assembly, homodimer. Homotetramer; when activated by GTP-bound RAB29. Interacts with PRKN, PRDX3, and TPCN2. Interacts with VPS35. Interacts (via N-terminus) with RAB29; this interaction is direct and stimulates kinase activity. Interacts (via ROC domain) with SEC16A. Interacts with APP; interaction promotes phosphorylation of 'Thr-743' of APP. Interacts with MAPT. Interacts with RAB8A, RAB10, and RAB12. Interacts (via N-terminus) with RAB32. Interacts with YWHAG; this interaction is dependent on phosphorylation of Ser-910 and either Ser-935 or Ser-1444. Interacts with SFN; this interaction is dependent on phosphorylation of Ser-910 and/or Ser-935. Mg(2+) is required as a cofactor. Autophosphorylated at Ser-1292; autophosphorylation is stimulated by RAB29. Phosphorylation of Ser-910 and either Ser-935 or Ser-1444 facilitates interaction with YWHAG. Phosphorylation of Ser-910 and/or Ser-935 facilitates interaction with SFN. Post-translationally, ubiquitinated by TRIM1; undergoes 'Lys-48'-linked polyubiquitination leading to proteasomal degradation. As to expression, expressed in pyramidal neurons in all cortical laminae of the visual cortex, in neurons of the substantia nigra pars compacta and caudate putamen (at protein level). Expressed in neutrophils (at protein level). Expressed in the brain. Expressed throughout the adult brain, but at a lower level than in heart and liver. Also expressed in placenta, lung, skeletal muscle, kidney and pancreas. In the brain, expressed in the cerebellum, cerebral cortex, medulla, spinal cord occipital pole, frontal lobe, temporal lobe and putamen. Expression is particularly high in brain dopaminoceptive areas.

Its subcellular location is the cytoplasmic vesicle. The protein localises to the perikaryon. The protein resides in the golgi apparatus membrane. It localises to the cell projection. It is found in the axon. Its subcellular location is the dendrite. The protein localises to the endoplasmic reticulum membrane. The protein resides in the secretory vesicle. It localises to the synaptic vesicle membrane. It is found in the endosome. Its subcellular location is the lysosome. The protein localises to the mitochondrion outer membrane. The protein resides in the cytoplasm. It localises to the cytoskeleton. It is found in the phagosome. The catalysed reaction is L-threonyl-[protein] + ATP = O-phospho-L-threonyl-[protein] + ADP + H(+). It carries out the reaction L-seryl-[protein] + ATP = O-phospho-L-seryl-[protein] + ADP + H(+). The enzyme catalyses GTP + H2O = GDP + phosphate + H(+). Its activity is regulated as follows. Kinase activity is regulated by the GTPase activity of the ROC domain. GTP-bound LRRK2 kinase activity is stimulated by RAB29. Phosphorylation of RAB10 'Thr-73' is stimulated by RAB29 and RAB32. Inhibited by small molecule inhibitor MLi-2. Its function is as follows. Serine/threonine-protein kinase which phosphorylates a broad range of proteins involved in multiple processes such as neuronal plasticity, innate immunity, autophagy, and vesicle trafficking. Is a key regulator of RAB GTPases by regulating the GTP/GDP exchange and interaction partners of RABs through phosphorylation. Phosphorylates RAB3A, RAB3B, RAB3C, RAB3D, RAB5A, RAB5B, RAB5C, RAB8A, RAB8B, RAB10, RAB12, RAB29, RAB35, and RAB43. Regulates the RAB3IP-catalyzed GDP/GTP exchange for RAB8A through the phosphorylation of 'Thr-72' on RAB8A. Inhibits the interaction between RAB8A and GDI1 and/or GDI2 by phosphorylating 'Thr-72' on RAB8A. Regulates primary ciliogenesis through phosphorylation of RAB8A and RAB10, which promotes SHH signaling in the brain. Together with RAB29, plays a role in the retrograde trafficking pathway for recycling proteins, such as mannose-6-phosphate receptor (M6PR), between lysosomes and the Golgi apparatus in a retromer-dependent manner. Regulates neuronal process morphology in the intact central nervous system (CNS). Plays a role in synaptic vesicle trafficking. Plays an important role in recruiting SEC16A to endoplasmic reticulum exit sites (ERES) and in regulating ER to Golgi vesicle-mediated transport and ERES organization. Positively regulates autophagy through a calcium-dependent activation of the CaMKK/AMPK signaling pathway. The process involves activation of nicotinic acid adenine dinucleotide phosphate (NAADP) receptors, increase in lysosomal pH, and calcium release from lysosomes. Phosphorylates PRDX3. By phosphorylating APP on 'Thr-743', which promotes the production and the nuclear translocation of the APP intracellular domain (AICD), regulates dopaminergic neuron apoptosis. Acts as a positive regulator of innate immunity by mediating phosphorylation of RIPK2 downstream of NOD1 and NOD2, thereby enhancing RIPK2 activation. Independent of its kinase activity, inhibits the proteasomal degradation of MAPT, thus promoting MAPT oligomerization and secretion. In addition, has GTPase activity via its Roc domain which regulates LRRK2 kinase activity. Recruited by RAB29/RAB7L1 to overloaded lysosomes where it phosphorylates and stabilizes RAB8A and RAB10 which promote lysosomal content release and suppress lysosomal enlargement through the EHBP1 and EHBP1L1 effector proteins. This Homo sapiens (Human) protein is Leucine-rich repeat serine/threonine-protein kinase 2 (LRRK2).